Here is a 179-residue protein sequence, read N- to C-terminus: Large ribosomal subunit protein uL6 (179 aa).

The protein belongs to the universal ribosomal protein uL6 family. As to quaternary structure, part of the 50S ribosomal subunit.

This protein binds to the 23S rRNA, and is important in its secondary structure. It is located near the subunit interface in the base of the L7/L12 stalk, and near the tRNA binding site of the peptidyltransferase center. This is Large ribosomal subunit protein uL6 from Mycobacteroides abscessus (strain ATCC 19977 / DSM 44196 / CCUG 20993 / CIP 104536 / JCM 13569 / NCTC 13031 / TMC 1543 / L948) (Mycobacterium abscessus).